Reading from the N-terminus, the 39-residue chain is Metallocarboxypeptidase inhibitor (39 aa).

Gln1 carries the post-translational modification Pyrrolidone carboxylic acid. 3 disulfide bridges follow: Cys8/Cys24, Cys12/Cys27, and Cys18/Cys34.

As to expression, highly concentrated in tubers. Closely related but distinct forms of MCPI are present in leaves, stems and buds.

In terms of biological role, may play a defensive role against insect attacks. Inhibits A.aegypti carboxypeptidase CPB1. The sequence is that of Metallocarboxypeptidase inhibitor from Solanum tuberosum (Potato).